The primary structure comprises 176 residues: Centromere protein R (176 aa).

Residue Lys-8 forms a Glycyl lysine isopeptide (Lys-Gly) (interchain with G-Cter in SUMO2) linkage. Ser-17 carries the phosphoserine modification. The DD1 stretch occupies residues 20–50 (PSKIMRKKSITAFSPTTGTYQLSPFSSPRTP). Lys-22 is covalently cross-linked (Glycyl lysine isopeptide (Lys-Gly) (interchain with G-Cter in SUMO2)). The residue at position 28 (Ser-28) is a Phosphoserine. The span at 34–48 (PTTGTYQLSPFSSPR) shows a compositional bias: polar residues. Positions 34 to 80 (PTTGTYQLSPFSSPRTPKEQEHRDGPSNGTRKWSVLSSPARQDSTVK) are disordered. Residues 49–58 (TPKEQEHRDG) show a composition bias toward basic and acidic residues. Residues 60 to 80 (SNGTRKWSVLSSPARQDSTVK) show a composition bias toward polar residues. A Nuclear localization signal motif is present at residues 63-66 (TRKW). The residue at position 71 (Ser-71) is a Phosphoserine. Residues 82–112 (SDGFMMLLSKIERSSEKTMEIMKNLSSLQAL) are a coiled coil. An LXXLL motif motif is present at residues 118–122 (LEDLL). Positions 171–175 (LKAIL) match the LXXIL motif motif.

Homodimer; mediated by the coiled coil domain. Interacts with CCNA2 and MTA1. Interacts with NFKB1 NF-kappa-B subunit. Component of the CENPA-CAD complex, composed of CENPI, CENPK, CENPL, CENPO, CENPP, CENPQ, CENPR and CENPS. The CENPA-CAD complex interacts with the CENPA-NAC complex, at least composed of CENPA, CENPC, CENPH, CENPM, CENPN, CENPT and CENPU. Interacts with TASOR.

It is found in the nucleus. Its subcellular location is the chromosome. It localises to the centromere. The protein resides in the kinetochore. Transcription coregulator that can have both coactivator and corepressor functions. Involved in the coactivation of nuclear receptors for retinoid X (RXRs) and thyroid hormone (TRs) in a ligand-dependent fashion. In contrast, it does not coactivate nuclear receptors for retinoic acid, vitamin D, progesterone receptor, nor glucocorticoid. Acts as a coactivator for estrogen receptor alpha. Acts as a transcriptional corepressor via its interaction with the NFKB1 NF-kappa-B subunit, possibly by interfering with the transactivation domain of NFKB1. Induces apoptosis in breast cancer cells, but not in other cancer cells, via a caspase-2 mediated pathway that involves mitochondrial membrane permeabilization but does not require other caspases. May also act as an inhibitor of cyclin A-associated kinase. Also acts a component of the CENPA-CAD (nucleosome distal) complex, a complex recruited to centromeres which is involved in assembly of kinetochore proteins, mitotic progression and chromosome segregation. May be involved in incorporation of newly synthesized CENPA into centromeres via its interaction with the CENPA-NAC complex. The protein is Centromere protein R (Itgb3bp) of Rattus norvegicus (Rat).